Here is a 117-residue protein sequence, read N- to C-terminus: Ig lambda-1 chain V region (117 aa).

An N-terminal signal peptide occupies residues 1 to 20; that stretch reads MAWISLILSLLALSSGGAIS. At Q21 the chain carries Pyrrolidone carboxylic acid. In terms of domain architecture, Ig-like spans 21 to 117; that stretch reads QAVVTQESAL…YFCALWYSNH (97 aa).

The sequence is that of Ig lambda-1 chain V region from Mus musculus (Mouse).